We begin with the raw amino-acid sequence, 484 residues long: ATP synthase subunit beta (484 aa).

Position 156–163 (156–163 (GGAGVGKT)) interacts with ATP.

The protein belongs to the ATPase alpha/beta chains family. In terms of assembly, F-type ATPases have 2 components, CF(1) - the catalytic core - and CF(0) - the membrane proton channel. CF(1) has five subunits: alpha(3), beta(3), gamma(1), delta(1), epsilon(1). CF(0) has three main subunits: a(1), b(2) and c(9-12). The alpha and beta chains form an alternating ring which encloses part of the gamma chain. CF(1) is attached to CF(0) by a central stalk formed by the gamma and epsilon chains, while a peripheral stalk is formed by the delta and b chains.

The protein resides in the cell inner membrane. The enzyme catalyses ATP + H2O + 4 H(+)(in) = ADP + phosphate + 5 H(+)(out). Functionally, produces ATP from ADP in the presence of a proton gradient across the membrane. The catalytic sites are hosted primarily by the beta subunits. This chain is ATP synthase subunit beta, found in Rhizorhabdus wittichii (strain DSM 6014 / CCUG 31198 / JCM 15750 / NBRC 105917 / EY 4224 / RW1) (Sphingomonas wittichii).